The primary structure comprises 163 residues: N5-carboxyaminoimidazole ribonucleotide mutase (163 aa).

Residues Ser-11, Asp-14, and Arg-41 each coordinate substrate.

Belongs to the AIR carboxylase family. Class I subfamily.

The enzyme catalyses 5-carboxyamino-1-(5-phospho-D-ribosyl)imidazole + H(+) = 5-amino-1-(5-phospho-D-ribosyl)imidazole-4-carboxylate. It functions in the pathway purine metabolism; IMP biosynthesis via de novo pathway; 5-amino-1-(5-phospho-D-ribosyl)imidazole-4-carboxylate from 5-amino-1-(5-phospho-D-ribosyl)imidazole (N5-CAIR route): step 2/2. Catalyzes the conversion of N5-carboxyaminoimidazole ribonucleotide (N5-CAIR) to 4-carboxy-5-aminoimidazole ribonucleotide (CAIR). The polypeptide is N5-carboxyaminoimidazole ribonucleotide mutase (Pseudomonas aeruginosa (strain ATCC 15692 / DSM 22644 / CIP 104116 / JCM 14847 / LMG 12228 / 1C / PRS 101 / PAO1)).